We begin with the raw amino-acid sequence, 95 residues long: Large ribosomal subunit protein bL25 (95 aa).

It belongs to the bacterial ribosomal protein bL25 family. In terms of assembly, part of the 50S ribosomal subunit; part of the 5S rRNA/L5/L18/L25 subcomplex. Contacts the 5S rRNA. Binds to the 5S rRNA independently of L5 and L18.

This is one of the proteins that binds to the 5S RNA in the ribosome where it forms part of the central protuberance. The sequence is that of Large ribosomal subunit protein bL25 from Glaesserella parasuis serovar 5 (strain SH0165) (Haemophilus parasuis).